We begin with the raw amino-acid sequence, 318 residues long: NADH-quinone oxidoreductase subunit H 2 (318 aa).

The next 9 helical transmembrane spans lie at 4 to 24 (LLIA…AGVF), 77 to 97 (LAPA…AFAP), 106 to 126 (VGVL…VLGA), 146 to 166 (LAYE…AGSF), 179 to 199 (LWFI…GLAA), 214 to 234 (LVAG…FLGE), 238 to 258 (ILLV…GPIL), 262 to 282 (VWFG…RAAL), and 293 to 313 (FAWK…AWIA).

Belongs to the complex I subunit 1 family. As to quaternary structure, NDH-1 is composed of 14 different subunits. Subunits NuoA, H, J, K, L, M, N constitute the membrane sector of the complex.

The protein localises to the cell inner membrane. The enzyme catalyses a quinone + NADH + 5 H(+)(in) = a quinol + NAD(+) + 4 H(+)(out). NDH-1 shuttles electrons from NADH, via FMN and iron-sulfur (Fe-S) centers, to quinones in the respiratory chain. The immediate electron acceptor for the enzyme in this species is believed to be ubiquinone. Couples the redox reaction to proton translocation (for every two electrons transferred, four hydrogen ions are translocated across the cytoplasmic membrane), and thus conserves the redox energy in a proton gradient. This subunit may bind ubiquinone. The polypeptide is NADH-quinone oxidoreductase subunit H 2 (Cereibacter sphaeroides (strain ATCC 17029 / ATH 2.4.9) (Rhodobacter sphaeroides)).